The sequence spans 295 residues: Protoheme IX farnesyltransferase (295 aa).

Transmembrane regions (helical) follow at residues 8 to 28 (VTKPGIIFGNLISVIGGFLLA), 35 to 55 (YTLFASTLVGVSLVVASGCVF), 84 to 104 (VSLVYATLLGIAGFMLLWFGA), 107 to 127 (LACWLGVMGFVVYVGVYSLYM), 132 to 152 (VYGTLIGSLSGAAPPVIGYCA), 162 to 182 (LILLAIFSLWQMPHSYAIAIF), 208 to 228 (ITLYIIAFAVATLMLSLGGYA), 233 to 253 (LVVAAAVSVWWLGMALRGYKV), and 264 to 284 (FVFSIVAITSLSVMMSVDFMV).

It belongs to the UbiA prenyltransferase family. Protoheme IX farnesyltransferase subfamily.

It localises to the cell inner membrane. The catalysed reaction is heme b + (2E,6E)-farnesyl diphosphate + H2O = Fe(II)-heme o + diphosphate. It functions in the pathway porphyrin-containing compound metabolism; heme O biosynthesis; heme O from protoheme: step 1/1. Its function is as follows. Converts heme B (protoheme IX) to heme O by substitution of the vinyl group on carbon 2 of heme B porphyrin ring with a hydroxyethyl farnesyl side group. This chain is Protoheme IX farnesyltransferase, found in Enterobacter sp. (strain 638).